We begin with the raw amino-acid sequence, 513 residues long: ATP synthase subunit alpha (513 aa).

Residue 169–176 (GDRQTGKT) participates in ATP binding.

The protein belongs to the ATPase alpha/beta chains family. F-type ATPases have 2 components, CF(1) - the catalytic core - and CF(0) - the membrane proton channel. CF(1) has five subunits: alpha(3), beta(3), gamma(1), delta(1), epsilon(1). CF(0) has three main subunits: a(1), b(2) and c(9-12). The alpha and beta chains form an alternating ring which encloses part of the gamma chain. CF(1) is attached to CF(0) by a central stalk formed by the gamma and epsilon chains, while a peripheral stalk is formed by the delta and b chains.

Its subcellular location is the cell inner membrane. The catalysed reaction is ATP + H2O + 4 H(+)(in) = ADP + phosphate + 5 H(+)(out). Produces ATP from ADP in the presence of a proton gradient across the membrane. The alpha chain is a regulatory subunit. This is ATP synthase subunit alpha from Hydrogenovibrio crunogenus (strain DSM 25203 / XCL-2) (Thiomicrospira crunogena).